Here is a 275-residue protein sequence, read N- to C-terminus: Proteasome subunit beta (275 aa).

The propeptide at 1 to 52 is removed in mature form; by autocatalysis; sequence MQDTTANQVAANATSSFTEHLQRNRPGLLPYNQPFPAALTGAGSQPLQVPHA. Thr53 acts as the Nucleophile in catalysis.

It belongs to the peptidase T1B family. In terms of assembly, the 20S proteasome core is composed of 14 alpha and 14 beta subunits that assemble into four stacked heptameric rings, resulting in a barrel-shaped structure. The two inner rings, each composed of seven catalytic beta subunits, are sandwiched by two outer rings, each composed of seven alpha subunits. The catalytic chamber with the active sites is on the inside of the barrel. Has a gated structure, the ends of the cylinder being occluded by the N-termini of the alpha-subunits. Is capped by the proteasome-associated ATPase, ARC.

It localises to the cytoplasm. The catalysed reaction is Cleavage of peptide bonds with very broad specificity.. The protein operates within protein degradation; proteasomal Pup-dependent pathway. Its activity is regulated as follows. The formation of the proteasomal ATPase ARC-20S proteasome complex, likely via the docking of the C-termini of ARC into the intersubunit pockets in the alpha-rings, may trigger opening of the gate for substrate entry. Interconversion between the open-gate and close-gate conformations leads to a dynamic regulation of the 20S proteasome proteolysis activity. Functionally, component of the proteasome core, a large protease complex with broad specificity involved in protein degradation. The chain is Proteasome subunit beta from Arthrobacter sp. (strain FB24).